A 420-amino-acid polypeptide reads, in one-letter code: MVSRQEQFEQVQAVKKSINTASEEVKNQALLAMADHLVAATEEILAANALDMAAAKGKISDVMLDRLYLDADRIEAMARGIREVVALPDPIGEVLETSQLENGLVITKKRVAMGVIGIIYESRPNVTSDAAALTLKSGNAVVLRSGKDAYQTTHAIVTALKKGLETTTIHPNVIQLVEDTSRESSYAMMKAKGYLDLLIPRGGAGLINAVVENAIVPVIETGTGIVHVYVDKDADEDKALSIINNAKTSRPSVCNAMEVLLVHENKAASILPRLDQMLVAERKEAGLEPIQFRLDSKASQFVSGQAAETQDFDTEFLDYVLAVKVVSSLEEAVSHIESHSTHHSDAIVTENAEAAAYFTDQVDSAAVYVNASTRFTDGGQFGLGCEMGISTQKLHARGPMGLKELTSYKYVVTGDGQIRE.

The protein belongs to the gamma-glutamyl phosphate reductase family.

The protein localises to the cytoplasm. The enzyme catalyses L-glutamate 5-semialdehyde + phosphate + NADP(+) = L-glutamyl 5-phosphate + NADPH + H(+). It participates in amino-acid biosynthesis; L-proline biosynthesis; L-glutamate 5-semialdehyde from L-glutamate: step 2/2. Its function is as follows. Catalyzes the NADPH-dependent reduction of L-glutamate 5-phosphate into L-glutamate 5-semialdehyde and phosphate. The product spontaneously undergoes cyclization to form 1-pyrroline-5-carboxylate. This chain is Gamma-glutamyl phosphate reductase, found in Streptococcus pneumoniae (strain P1031).